The following is a 360-amino-acid chain: Replication-associated protein (360 aa).

One can recognise a CRESS-DNA virus Rep endonuclease domain in the interval 11 to 114; that stretch reads SHRNANTFLT…PLAVFERGTF (104 aa). The RCR-1 motif lies at 18–21; that stretch reads FLTY. Glu52, His60, and His62 together coordinate a divalent metal cation. An RCR-2 motif is present at residues 60–62; sequence HLH. Tyr100 acts as the For DNA cleavage activity in catalysis. An RCR-3 motif is present at residues 100–103; that stretch reads YILK. Glu104 contributes to the a divalent metal cation binding site. The oligomerization stretch occupies residues 175 to 187; that stretch reads SANKLFPEIQEEF. Residue 229–236 coordinates ATP; the sequence is GPTRTGKS. Positions 252-270 are transactivation; the sequence is VDWSSYNEDAIYNIVDDIP. Residues 292 to 303 carry the Nuclear localization signal motif; sequence KYGKKKKVQKKS.

This sequence belongs to the geminiviridae Rep protein family. In terms of assembly, homooligomer. Rep binds to repeated DNA motifs (iterons). Forms the O-complex, which is a Rep-DNA complex involved in the initiation of RCR. Part of the C- and V-complexes which are RepA-Rep-DNA complexes involved in the c-sense and v-sense transcription. Mg(2+) is required as a cofactor. Mn(2+) serves as cofactor.

Its subcellular location is the host nucleus. Functionally, essential for the replication of viral ssDNA. The closed circular ssDNA genome is first converted to a superhelical dsDNA. Rep binds a specific region at the genome origin of replication. It introduces an endonucleolytic nick within the conserved sequence 5'-TAATATTAC-3' in the intergenic region of the genome present in all geminiviruses, thereby initiating the rolling circle replication (RCR). Following cleavage, binds covalently to the 5'-phosphate of DNA as a tyrosyl ester. The cleavage gives rise to a free 3'-OH that serves as a primer for the cellular DNA polymerase. The polymerase synthesizes the (+) strand DNA by rolling circle mechanism. After one round of replication, a Rep-catalyzed nucleotidyl transfer reaction releases a circular single-stranded virus genome, thereby terminating the replication. Displays origin-specific DNA cleavage, nucleotidyl transferase, ATPase and helicase activities. Acts as an inhibitor of C-sense gene transcription. The chain is Replication-associated protein from Maize streak virus genotype A (isolate Nigeria) (MSV).